The chain runs to 450 residues: Probable ATP-dependent RNA helicase MG425 homolog (450 aa).

The Q motif signature appears at 3-31 (STFNELGVSPALIATLKDNNINQPTTIQQ). Residues 34-206 (IPQFLQHQNL…KQITKNGIFL (173 aa)) enclose the Helicase ATP-binding domain. 47–54 (SPTGTGKT) is a binding site for ATP. The DEVD box motif lies at 154-157 (DEVD). The 151-residue stretch at 234 to 384 (RKKQALYSLV…PLRPMRLRLI (151 aa)) folds into the Helicase C-terminal domain. The segment at 429–450 (MRQPERDMQKNKLHDSDWQSNM) is disordered. Residues 430-450 (RQPERDMQKNKLHDSDWQSNM) show a composition bias toward basic and acidic residues.

This sequence belongs to the DEAD box helicase family.

It catalyses the reaction ATP + H2O = ADP + phosphate + H(+). The sequence is that of Probable ATP-dependent RNA helicase MG425 homolog from Mycoplasma pneumoniae (strain ATCC 29342 / M129 / Subtype 1) (Mycoplasmoides pneumoniae).